The following is a 164-amino-acid chain: MAFKDNAVELEERVVAVNRVTKVVKGGRRLRFAALVVVGDHNGRVGFGTGKAQEVPEAIRKAVDDAKKNLIEVPMVGTTIPHEVLSEFGGAKVLLKPAVEGSGVAAGGAVRAVVELAGVADITSKSLGSNTPINIVRATVEGLKQLKRAEEIAALRGISVSDLA.

One can recognise an S5 DRBM domain in the interval 10-73 (LEERVVAVNR…DDAKKNLIEV (64 aa)).

This sequence belongs to the universal ribosomal protein uS5 family. As to quaternary structure, part of the 30S ribosomal subunit. Contacts proteins S4 and S8.

Its function is as follows. With S4 and S12 plays an important role in translational accuracy. Functionally, located at the back of the 30S subunit body where it stabilizes the conformation of the head with respect to the body. This chain is Small ribosomal subunit protein uS5, found in Streptococcus pneumoniae serotype 2 (strain D39 / NCTC 7466).